Consider the following 101-residue polypeptide: Small ribosomal subunit protein uS17 (101 aa).

This sequence belongs to the universal ribosomal protein uS17 family. As to quaternary structure, part of the 30S ribosomal subunit.

Functionally, one of the primary rRNA binding proteins, it binds specifically to the 5'-end of 16S ribosomal RNA. This Kosmotoga olearia (strain ATCC BAA-1733 / DSM 21960 / TBF 19.5.1) protein is Small ribosomal subunit protein uS17.